The sequence spans 515 residues: Mucin-like protein Glc1.8b (515 aa).

The N-terminal stretch at Met-1–Ser-20 is a signal peptide. Over His-21–Pro-467 the chain is Extracellular. 29 N-linked (GlcNAc...) asparagine; by host glycosylation sites follow: Asn-24, Asn-45, Asn-51, Asn-60, Asn-85, Asn-93, Asn-102, Asn-123, Asn-129, Asn-138, Asn-180, Asn-201, Asn-207, Asn-216, Asn-258, Asn-279, Asn-285, Asn-294, Asn-319, Asn-327, Asn-336, Asn-357, Asn-363, Asn-372, Asn-397, Asn-405, Asn-413, Asn-434, and Asn-441. The segment at Ser-80–Leu-114 is disordered. The segment covering Ile-86 to Thr-104 has biased composition (polar residues). Residues Ser-314 to Thr-358 form a disordered region. Residues Ile-320 to Thr-338 are compositionally biased toward polar residues. Positions Arg-393–Asn-413 are disordered. Residues Tyr-468–Phe-488 traverse the membrane as a helical segment. The Cytoplasmic portion of the chain corresponds to Arg-489–Glu-515.

It belongs to the polydnaviridae Glc1.8 protein family.

It is found in the host membrane. Its function is as follows. Involved in suppression of the insect cellular immune response. Inhibits host hemocyte adhesion and phagocytosis. The chain is Mucin-like protein Glc1.8b (O16) from Microplitis demolitor (Parasitoid wasp).